Consider the following 1360-residue polypeptide: DNA-directed RNA polymerase subunit beta (1360 aa).

It belongs to the RNA polymerase beta chain family. As to quaternary structure, the RNAP catalytic core consists of 2 alpha, 1 beta, 1 beta' and 1 omega subunit. When a sigma factor is associated with the core the holoenzyme is formed, which can initiate transcription.

It catalyses the reaction RNA(n) + a ribonucleoside 5'-triphosphate = RNA(n+1) + diphosphate. Functionally, DNA-dependent RNA polymerase catalyzes the transcription of DNA into RNA using the four ribonucleoside triphosphates as substrates. This Vesicomyosocius okutanii subsp. Calyptogena okutanii (strain HA) protein is DNA-directed RNA polymerase subunit beta.